A 527-amino-acid chain; its full sequence is N-acetylglucosamine-1-phosphodiester alpha-N-acetylglucosaminidase (527 aa).

Positions 1–25 (MASSMGRFLLFFIALRGFLLEASGD) are cleaved as a signal peptide. The propeptide at 26–49 (FGSGASRDDDVLLPYSRARARLAR) is removed in mature form. Topologically, residues 50–463 (DCTRVHAGRL…SLLTRTTWLA (414 aa)) are lumenal. Intrachain disulfides connect C116–C149, C133–C324, C308–C315, C363–C374, and C381–C390. Residues N209, N215, and N297 are each glycosylated (N-linked (GlcNAc...) asparagine). One can recognise an EGF-like domain in the interval 359–391 (DKLDCGPANCSQHGLCTETGCRCEAGWTGSNCS). N-linked (GlcNAc...) asparagine glycosylation is found at N367, N389, and N421. The chain crosses the membrane as a helical span at residues 464-484 (ITLALAFLLLISTAANVSLFL). Residues 485–527 (GSRAARRRHLDGAYVYHPLQEVNGEHPAAEKEQLGDSSNPFKD) are Cytoplasmic-facing. The mediates the interaction with AP4M1 stretch occupies residues 498 to 505 (YVYHPLQE). A Tyrosine-based internalization motif motif is present at residues 500-503 (YHPL). The NPF internalization motif motif lies at 523-527 (NPFKD).

Homotetramer arranged as two disulfide-linked homodimers. Interacts with AP4M1. Glycosylated. Contains complex N-linked oligosaccharides with appreciable amounts of sialic acid. Post-translationally, the precursor is cleaved and activated in the trans-Golgi network by a furin endopeptidase.

It is found in the golgi apparatus. Its subcellular location is the golgi stack membrane. The protein resides in the trans-Golgi network. It carries out the reaction N(4)-[6-(N-acetyl-alpha-D-glucosaminyl-1-phospho)-alpha-D-mannosyl-(1-&gt;2)-alpha-D-mannosyl-(glycan)]-L-asparaginyl-[protein] + H2O = N(4)-[6-phospho-alpha-D-mannosyl-(1-&gt;2)-alpha-D-mannosyl-(glycan)]-L-asparaginyl-[protein] + N-acetyl-D-glucosamine + H(+). The protein operates within protein modification; protein glycosylation. Its function is as follows. Catalyzes the second step in the formation of the mannose 6-phosphate targeting signal on lysosomal enzyme oligosaccharides by removing GlcNAc residues from GlcNAc-alpha-P-mannose moieties, which are formed in the first step. Also hydrolyzes UDP-GlcNAc, a sugar donor for Golgi N-acetylglucosaminyltransferases. This chain is N-acetylglucosamine-1-phosphodiester alpha-N-acetylglucosaminidase (NAGPA), found in Bos taurus (Bovine).